Consider the following 152-residue polypeptide: Deoxyuridine 5'-triphosphate nucleotidohydrolase (152 aa).

Substrate contacts are provided by residues 71 to 73 (RSG), asparagine 84, 88 to 90 (LID), and methionine 98.

The protein belongs to the dUTPase family. Requires Mg(2+) as cofactor.

The catalysed reaction is dUTP + H2O = dUMP + diphosphate + H(+). It participates in pyrimidine metabolism; dUMP biosynthesis; dUMP from dCTP (dUTP route): step 2/2. In terms of biological role, this enzyme is involved in nucleotide metabolism: it produces dUMP, the immediate precursor of thymidine nucleotides and it decreases the intracellular concentration of dUTP so that uracil cannot be incorporated into DNA. The chain is Deoxyuridine 5'-triphosphate nucleotidohydrolase from Aeromonas salmonicida (strain A449).